Consider the following 405-residue polypeptide: Type II secretion system protein F (405 aa).

The Cytoplasmic segment spans residues 1–168 (MAAFEYLALD…QRQQSRQKIQ (168 aa)). Ca(2+) contacts are provided by Thr97, Glu151, and Asp155. Residues 169-189 (LALLYPVILMVASLAIVGFLL) form a helical membrane-spanning segment. Over 190 to 219 (GYVVPDVVRVFIDSGQTLPLLTRVLIGVSD) the chain is Periplasmic. Residues 220-239 (WVKAWGALAFVAAIGGVIGF) form a helical membrane-spanning segment. The Cytoplasmic segment spans residues 240–376 (RYALRKDAFR…IGLMVGLFEP (137 aa)). The chain crosses the membrane as a helical span at residues 377–397 (FMLIFMGAVVLVIVLAILLPI). Residues 398–405 (LSLNQLVG) are Periplasmic-facing.

Belongs to the GSP F family. In terms of assembly, type II secretion system is composed of four main components: the outer membrane complex, the inner membrane complex, the cytoplasmic secretion ATPase and the periplasm-spanning pseudopilus. Homodimer. Interacts with XcpR/GspE and XcpY/GspL components.

Its subcellular location is the cell inner membrane. Component of the type II secretion system inner membrane complex required for the energy-dependent secretion of extracellular factors such as proteases and toxins from the periplasm. This is Type II secretion system protein F (xcpS) from Pseudomonas aeruginosa (strain ATCC 15692 / DSM 22644 / CIP 104116 / JCM 14847 / LMG 12228 / 1C / PRS 101 / PAO1).